The following is a 213-amino-acid chain: Ribosomal RNA large subunit methyltransferase E (213 aa).

S-adenosyl-L-methionine contacts are provided by Gly59, Phe61, Asp79, Asp97, and Asp121. The Proton acceptor role is filled by Lys161.

The protein belongs to the class I-like SAM-binding methyltransferase superfamily. RNA methyltransferase RlmE family.

It is found in the cytoplasm. It carries out the reaction uridine(2552) in 23S rRNA + S-adenosyl-L-methionine = 2'-O-methyluridine(2552) in 23S rRNA + S-adenosyl-L-homocysteine + H(+). Its function is as follows. Specifically methylates the uridine in position 2552 of 23S rRNA at the 2'-O position of the ribose in the fully assembled 50S ribosomal subunit. This is Ribosomal RNA large subunit methyltransferase E from Myxococcus xanthus (strain DK1622).